The following is a 1632-amino-acid chain: Guanine exchange factor for Rac 30 (1632 aa).

The region spanning 16–122 (NIQIDSFTSW…VIFLLIQKIK (107 aa)) is the Calponin-homology (CH) domain. 2 disordered regions span residues 134–155 (QGET…TPTK) and 171–285 (FSHI…PTTG). Low complexity-rich tracts occupy residues 137-154 (TTGT…TTPT) and 180-284 (QSSS…SPTT). IQ domains follow at residues 388-417 (DLKK…KYKQ) and 432-461 (AYRG…LYRR). The region spanning 460-638 (RRNEIVKEIL…KDVAEYVNEK (179 aa)) is the DH domain. Low complexity predominate over residues 775–795 (QINNQNNNQNNNQNNNLNNNN). A disordered region spans residues 775-798 (QINNQNNNQNNNQNNNLNNNNDDS). The PH 1 domain maps to 940 to 1038 (DSEFSNVLEK…WISLIRLSIK (99 aa)). The segment covering 1138-1156 (STSASQSQSQSPSPSPSHS) has biased composition (low complexity). A disordered region spans residues 1138-1161 (STSASQSQSQSPSPSPSHSINQKQ). An Arf-GAP domain is found at 1271–1389 (NSCGDNINND…NNNNNNSQNG (119 aa)). Residues 1286–1309 (CAECGASDPSWVSINYGVVVCLDC) form a C4-type zinc finger. Low complexity-rich tracts occupy residues 1380–1402 (NNNN…TSTT), 1409–1431 (STPT…TTQT), and 1441–1481 (SSPT…TTPT). Residues 1380–1521 (NNNNNNSQNG…SSHAITERKT (142 aa)) form a disordered region. A compositionally biased stretch (polar residues) spans 1500–1515 (DTSNGKGTWSRGSSHA). The 100-residue stretch at 1532 to 1631 (KKEHQGYLFK…WLDVLSSHTT (100 aa)) folds into the PH 2 domain.

It is found in the membrane. It localises to the cytoplasmic vesicle. Its subcellular location is the phagosome membrane. In terms of biological role, GTPase-activating protein for Rac involved in streaming and development. The chain is Guanine exchange factor for Rac 30 (gxcDD) from Dictyostelium discoideum (Social amoeba).